The primary structure comprises 864 residues: Bifunctional uridylyltransferase/uridylyl-removing enzyme (864 aa).

The tract at residues 1–328 is uridylyltransferase; it reads MLFPYFPLSE…QTNEPVQVRL (328 aa). Positions 329 to 686 are uridylyl-removing; the sequence is LDKEFQCVNN…ISNRFSEGGT (358 aa). Residues 446 to 562 form the HD domain; it reads VDEHIVRTLL…LHFAEAVQNN (117 aa). ACT domains follow at residues 687 to 766 and 793 to 864; these read EIFV…TFRA and EMEL…LEPK.

The protein belongs to the GlnD family. Mg(2+) serves as cofactor.

The catalysed reaction is [protein-PII]-L-tyrosine + UTP = [protein-PII]-uridylyl-L-tyrosine + diphosphate. It carries out the reaction [protein-PII]-uridylyl-L-tyrosine + H2O = [protein-PII]-L-tyrosine + UMP + H(+). Uridylyltransferase (UTase) activity is inhibited by glutamine, while glutamine activates uridylyl-removing (UR) activity. Its function is as follows. Modifies, by uridylylation and deuridylylation, the PII regulatory proteins (GlnB and homologs), in response to the nitrogen status of the cell that GlnD senses through the glutamine level. Under low glutamine levels, catalyzes the conversion of the PII proteins and UTP to PII-UMP and PPi, while under higher glutamine levels, GlnD hydrolyzes PII-UMP to PII and UMP (deuridylylation). Thus, controls uridylylation state and activity of the PII proteins, and plays an important role in the regulation of nitrogen assimilation and metabolism. The polypeptide is Bifunctional uridylyltransferase/uridylyl-removing enzyme (Pasteurella multocida (strain Pm70)).